Consider the following 522-residue polypeptide: MSQDLQKEVASRKTFAIISHPDAGKTTITEQLLLFGGVIRSAGTVKGKKSGKFATSDWMEIEKQRGISVTSSVMQFDYNGSRINILDTPGHSDFSEDTYRTLMAVDSAVMVIDAAKGIEAQTLKLFKVCRMRGIPIFTFINKMDRQGKMPLELLAELEEVLGIESYPMNWPIGMGKELAGLYDRYHRVIEQYRSEEDERFLPLGEDGDLKEAHAIQKSLYYDQALEEIMLLDEAGNDFSRERIIAGEQTPVFFGSALTNFGVETFLRTFVDFAPAPSSHESNEGVIEADNPKFSGFIFKIQANMNPAHRDRIAFIRICSGEFERGMNVTLTRTGKSLKLANSTQFMADDRETVNRAVAGDIIGLYDTGNYQIGDTITNGSKKLEFEKLPQFTPELFMRVYAKNVMKQKHFHKGVEQLVQEGAIQLFKTWRTEEYIIGAVGQLQFEVFEHRMRGEYNSEIRMEPIGKKIARWVKEEDADEKLSTARSMLVKDRFDQPLFLFENEFAINWFNDKNPDIELTSLL.

Positions 10–277 constitute a tr-type G domain; sequence ASRKTFAIIS…TFVDFAPAPS (268 aa). Residues 19–26, 87–91, and 141–144 each bind GTP; these read SHPDAGKT, DTPGH, and NKMD.

It belongs to the TRAFAC class translation factor GTPase superfamily. Classic translation factor GTPase family. PrfC subfamily.

The protein localises to the cytoplasm. Functionally, increases the formation of ribosomal termination complexes and stimulates activities of RF-1 and RF-2. It binds guanine nucleotides and has strong preference for UGA stop codons. It may interact directly with the ribosome. The stimulation of RF-1 and RF-2 is significantly reduced by GTP and GDP, but not by GMP. The polypeptide is Peptide chain release factor 3 (Listeria monocytogenes serovar 1/2a (strain ATCC BAA-679 / EGD-e)).